A 123-amino-acid polypeptide reads, in one-letter code: ATP synthase epsilon chain (123 aa).

Belongs to the ATPase epsilon chain family. F-type ATPases have 2 components, CF(1) - the catalytic core - and CF(0) - the membrane proton channel. CF(1) has five subunits: alpha(3), beta(3), gamma(1), delta(1), epsilon(1). CF(0) has three main subunits: a, b and c.

The protein resides in the cell inner membrane. Produces ATP from ADP in the presence of a proton gradient across the membrane. The protein is ATP synthase epsilon chain of Helicobacter pylori (strain G27).